The following is a 326-amino-acid chain: JNK1/MAPK8-associated membrane protein homolog (326 aa).

Residues 1–71 lie on the Lumenal side of the membrane; it reads MSSLSGHAST…CESCDTPLQP (71 aa). Asn-27 carries N-linked (GlcNAc...) asparagine glycosylation. Residues 72-92 form a helical membrane-spanning segment; it reads YDWMYLLFIALLPLLLHMQFI. Topologically, residues 93 to 108 are cytoplasmic; that stretch reads RIARKYCRTRYYEVSE. A helical transmembrane segment spans residues 109–129; the sequence is YLCVILENVIACVIAVLIYPP. Residues 130-166 lie on the Lumenal side of the membrane; the sequence is RFTFFLNGCSKTDIKEWYPACYNPRIGYTKTMRCTYE. The helical transmembrane segment at 167 to 187 threads the bilayer; it reads VVFPLYSITFIHHLILIGSIL. The Cytoplasmic portion of the chain corresponds to 188-208; sequence VLRSTLYCVLLYKTYNGKPFY. Helical transmembrane passes span 209 to 229 and 230 to 250; these read AAIV…GVVF and YTFP…HLAL. The Cytoplasmic portion of the chain corresponds to 251–269; sequence EGKRPLKEMIVRIATSPTH. The helical transmembrane segment at 270 to 290 threads the bilayer; that stretch reads LIFLSITMLMLSFGVIAIIAP. Topologically, residues 291-296 are lumenal; the sequence is LDIPYR. The helical transmembrane segment at 297 to 317 threads the bilayer; sequence WSFLCIVPVPFIFYMATIPFS. The Cytoplasmic segment spans residues 318–326; that stretch reads NPTTTMRLS.

The protein localises to the endoplasmic reticulum membrane. Facilitates degradation of misfolded endoplasmic reticulum (ER) proteins through the recruitment of components of the proteasome and endoplasmic reticulum-associated degradation (ERAD) system. Involved in ER stress response. This is JNK1/MAPK8-associated membrane protein homolog from Caenorhabditis elegans.